Consider the following 1427-residue polypeptide: DNA-directed RNA polymerase subunit beta' (1427 aa).

4 residues coordinate Zn(2+): cysteine 66, cysteine 68, cysteine 81, and cysteine 84. Mg(2+) contacts are provided by aspartate 472, aspartate 474, and aspartate 476. The Zn(2+) site is built by cysteine 815, cysteine 889, cysteine 896, and cysteine 899.

This sequence belongs to the RNA polymerase beta' chain family. In terms of assembly, the RNAP catalytic core consists of 2 alpha, 1 beta, 1 beta' and 1 omega subunit. When a sigma factor is associated with the core the holoenzyme is formed, which can initiate transcription. It depends on Mg(2+) as a cofactor. The cofactor is Zn(2+).

The catalysed reaction is RNA(n) + a ribonucleoside 5'-triphosphate = RNA(n+1) + diphosphate. In terms of biological role, DNA-dependent RNA polymerase catalyzes the transcription of DNA into RNA using the four ribonucleoside triphosphates as substrates. The chain is DNA-directed RNA polymerase subunit beta' from Bacteroides fragilis (strain ATCC 25285 / DSM 2151 / CCUG 4856 / JCM 11019 / LMG 10263 / NCTC 9343 / Onslow / VPI 2553 / EN-2).